A 372-amino-acid polypeptide reads, in one-letter code: 4-hydroxybenzoate polyprenyltransferase, mitochondrial (372 aa).

The transit peptide at 1–42 (MFIWQRKSILLGRSILGSGRVTVAGIIGSSRKRYTSSSSSSS) directs the protein to the mitochondrion. The next 7 helical transmembrane spans lie at 92–112 (PVGTWLLYLPCSWSILMGAMM), 114–134 (GATLSATAGMLGIFGVGALVM), 171–191 (ALVFLGAQTLVGMGVLSLLPA), 193–213 (CWWLGLASLPIVFTYPLFKRF), 229–249 (ALLGFPAMGVMSWPTMIPLYL), 298–318 (IALLAVAGLNSGLLWGPGFIG), and 352–372 (TGLYFTYALAVDYILRLFGFL).

The protein belongs to the UbiA prenyltransferase family. Mg(2+) serves as cofactor.

The protein resides in the mitochondrion inner membrane. The catalysed reaction is an all-trans-polyprenyl diphosphate + 4-hydroxybenzoate = a 4-hydroxy-3-(all-trans-polyprenyl)benzoate + diphosphate. The protein operates within cofactor biosynthesis; ubiquinone biosynthesis. Its function is as follows. Catalyzes the prenylation of para-hydroxybenzoate (PHB) with an all-trans polyprenyl group. Mediates the second step in the final reaction sequence of coenzyme Q (CoQ) biosynthesis, which is the condensation of the polyisoprenoid side chain with PHB, generating the first membrane-bound Q intermediate. The protein is 4-hydroxybenzoate polyprenyltransferase, mitochondrial of Saccharomyces cerevisiae (strain ATCC 204508 / S288c) (Baker's yeast).